The primary structure comprises 542 residues: Glucose-6-phosphate isomerase (542 aa).

Catalysis depends on glutamate 354, which acts as the Proton donor. Residues histidine 385 and lysine 505 contribute to the active site.

This sequence belongs to the GPI family.

The protein localises to the cytoplasm. It catalyses the reaction alpha-D-glucose 6-phosphate = beta-D-fructose 6-phosphate. Its pathway is carbohydrate biosynthesis; gluconeogenesis. It participates in carbohydrate degradation; glycolysis; D-glyceraldehyde 3-phosphate and glycerone phosphate from D-glucose: step 2/4. Functionally, catalyzes the reversible isomerization of glucose-6-phosphate to fructose-6-phosphate. This chain is Glucose-6-phosphate isomerase, found in Nitrosospira multiformis (strain ATCC 25196 / NCIMB 11849 / C 71).